Reading from the N-terminus, the 184-residue chain is GTP cyclohydrolase 1 (184 aa).

3 residues coordinate Zn(2+): Cys75, His78, and Cys146.

The protein belongs to the GTP cyclohydrolase I family. In terms of assembly, homomer.

It catalyses the reaction GTP + H2O = 7,8-dihydroneopterin 3'-triphosphate + formate + H(+). Its pathway is cofactor biosynthesis; 7,8-dihydroneopterin triphosphate biosynthesis; 7,8-dihydroneopterin triphosphate from GTP: step 1/1. The sequence is that of GTP cyclohydrolase 1 from Coxiella burnetii (strain Dugway 5J108-111).